We begin with the raw amino-acid sequence, 512 residues long: Sucrose transport protein SUC5 (512 aa).

The segment at 1–27 is disordered; sequence MGALEAERAANNATALETQSSPEDLGQ. The Cytoplasmic segment spans residues 1-33; that stretch reads MGALEAERAANNATALETQSSPEDLGQPSPLRK. The segment covering 11 to 22 has biased composition (polar residues); sequence NNATALETQSSP. Ser-20 carries the post-translational modification Phosphoserine. The helical transmembrane segment at 34–54 threads the bilayer; the sequence is IISVASIAAGVQFGWALQLSL. The Extracellular segment spans residues 55–67; sequence LTPYIQLLGIPHK. The chain crosses the membrane as a helical span at residues 68–88; it reads WSSYMWLCGPISGMIVQPIVG. The Cytoplasmic portion of the chain corresponds to 89 to 102; the sequence is YHSDRCESRFGRRR. A helical membrane pass occupies residues 103–123; sequence PFIAAGVALVAVSVFLIGFAA. The Extracellular segment spans residues 124 to 140; that stretch reads DMGHSFGDKLENKVRTR. Residues 141–161 form a helical membrane-spanning segment; that stretch reads AIIIFLTGFWFLDVANNTLQG. The Cytoplasmic portion of the chain corresponds to 162–179; it reads PCRAFLADLAAGDAKKTR. A helical transmembrane segment spans residues 180–200; sequence VANACFSFFMAVGNVLGYAAG. Topologically, residues 201–225 are extracellular; it reads SYTNLHKMFPFTMTKACDIYCANLK. The helical transmembrane segment at 226-246 threads the bilayer; sequence TCFFLSITLLLIVTFSSLWYV. Over 247-281 the chain is Cytoplasmic; sequence KDKQWSPPQGDKEEKTSSLFFFGEIFGAVRHMKRP. The chain crosses the membrane as a helical span at residues 282–302; that stretch reads MVMLLIVTVINWIAWFPFILY. Residues 303–333 are Extracellular-facing; that stretch reads DTDWMGREVYGGNSDGDERSKKLYDQGVQAG. Residues 334–354 traverse the membrane as a helical segment; sequence ALGLMFNSILLGFVSLGVESI. Topologically, residues 355–363 are cytoplasmic; that stretch reads GRKMGGAKR. A helical transmembrane segment spans residues 364 to 384; it reads LWGCVNFILAIGLAMTVLVTK. At 385–406 the chain is on the extracellular side; the sequence is SAEHHREIAGPLAGPSSGIKAG. Residues 407 to 427 traverse the membrane as a helical segment; sequence VFSLFTVLGIPLAITYSIPFA. Topologically, residues 428-440 are cytoplasmic; that stretch reads LASIFSTNSGAGQ. The helical transmembrane segment at 441 to 461 threads the bilayer; the sequence is GLSLGVLNIAICIPQMIVSFS. At 462 to 473 the chain is on the extracellular side; the sequence is SGPLDAQFGGGN. Residues 474–494 traverse the membrane as a helical segment; it reads LPSFVVGAIAAAVSGVLALTV. At 495–512 the chain is on the cytoplasmic side; sequence LPSPPPDAPAMSGAMGFH.

It belongs to the glycoside-pentoside-hexuronide (GPH) cation symporter transporter (TC 2.A.2.4) family. In terms of tissue distribution, widely expressed. Expressed in the endosperm and on the epidermis of the outer surface of the cotyledons of torpedo-stage or older embryos.

It is found in the cell membrane. The enzyme catalyses sucrose(out) + H(+)(out) = sucrose(in) + H(+)(in). It participates in glycan biosynthesis; sucrose metabolism. Its activity is regulated as follows. Inhibited by protonophores (e.g. carbonyl cyanide m-chlorophenyl-hydrazone (CCCP)) and SH group inhibitors (e.g. p-chloromercuribenzene sulphonic acid (PCMBS)). Functionally, responsible in a heterologous system for the transport of sucrose into the cell, with the concomitant uptake of protons (symport system). Can also transport biotin, and probably maltose at a lesser rate. In planta, the role of SUC5 for the transport of sucrose seems to be negligible. Plays a role in the nutrition of the filial tissues during early seed development and is probably involved in the import of biotin into the endosperm and the embryo epidermis. In Arabidopsis thaliana (Mouse-ear cress), this protein is Sucrose transport protein SUC5.